We begin with the raw amino-acid sequence, 114 residues long: T cell receptor alpha variable 12-3 (114 aa).

An N-terminal signal peptide occupies residues 1–21 (MMKSLRVLLVILWLQLSWVWS). The region spanning 24–114 (KEVEQDPGPL…DSATYLCAMS (91 aa)) is the Ig-like domain. N-linked (GlcNAc...) asparagine glycosylation occurs at asparagine 44. Cysteine 45 and cysteine 111 are disulfide-bonded.

As to quaternary structure, alpha-beta TR is a heterodimer composed of an alpha and beta chain; disulfide-linked. The alpha-beta TR is associated with the transmembrane signaling CD3 coreceptor proteins to form the TR-CD3 (TcR or TCR). The assembly of alpha-beta TR heterodimers with CD3 occurs in the endoplasmic reticulum where a single alpha-beta TR heterodimer associates with one CD3D-CD3E heterodimer, one CD3G-CD3E heterodimer and one CD247 homodimer forming a stable octameric structure. CD3D-CD3E and CD3G-CD3E heterodimers preferentially associate with TR alpha and TR beta chains, respectively. The association of the CD247 homodimer is the last step of TcR assembly in the endoplasmic reticulum and is required for transport to the cell surface.

Its subcellular location is the cell membrane. Functionally, v region of the variable domain of T cell receptor (TR) alpha chain that participates in the antigen recognition. Alpha-beta T cell receptors are antigen specific receptors which are essential to the immune response and are present on the cell surface of T lymphocytes. Recognize peptide-major histocompatibility (MH) (pMH) complexes that are displayed by antigen presenting cells (APC), a prerequisite for efficient T cell adaptive immunity against pathogens. Binding of alpha-beta TR to pMH complex initiates TR-CD3 clustering on the cell surface and intracellular activation of LCK that phosphorylates the ITAM motifs of CD3G, CD3D, CD3E and CD247 enabling the recruitment of ZAP70. In turn ZAP70 phosphorylates LAT, which recruits numerous signaling molecules to form the LAT signalosome. The LAT signalosome propagates signal branching to three major signaling pathways, the calcium, the mitogen-activated protein kinase (MAPK) kinase and the nuclear factor NF-kappa-B (NF-kB) pathways, leading to the mobilization of transcription factors that are critical for gene expression and essential for T cell growth and differentiation. The T cell repertoire is generated in the thymus, by V-(D)-J rearrangement. This repertoire is then shaped by intrathymic selection events to generate a peripheral T cell pool of self-MH restricted, non-autoaggressive T cells. Post-thymic interaction of alpha-beta TR with the pMH complexes shapes TR structural and functional avidity. The protein is T cell receptor alpha variable 12-3 of Homo sapiens (Human).